Reading from the N-terminus, the 89-residue chain is MALTVEQKAEILKEHGRKENDTGSPEVQVALLSANINGLQDHFKGHKKDHHSRRGLIRMVNQRRKLLDYLAKKDRTRYLQLIEKLGLRR.

The protein belongs to the universal ribosomal protein uS15 family. Part of the 30S ribosomal subunit. Forms a bridge to the 50S subunit in the 70S ribosome, contacting the 23S rRNA.

In terms of biological role, one of the primary rRNA binding proteins, it binds directly to 16S rRNA where it helps nucleate assembly of the platform of the 30S subunit by binding and bridging several RNA helices of the 16S rRNA. Functionally, forms an intersubunit bridge (bridge B4) with the 23S rRNA of the 50S subunit in the ribosome. The protein is Small ribosomal subunit protein uS15 of Alcanivorax borkumensis (strain ATCC 700651 / DSM 11573 / NCIMB 13689 / SK2).